Here is a 603-residue protein sequence, read N- to C-terminus: MDFPENLPSDIGRLEQIVSHFFPKALHIVLNSRIPSLQSRGRTRERLSGLNVRKSDKWFNLVMGDRPAALEKLHSWHRNILDSMIIDIILVHPISNDNLDDDDDHSDSVVRSAETVIERWVVQYENPLIMSPQSSDSATRYQKVYKKSIILLRSLYAQTRLLPAYRVSRQLSSSLASSGYDLIYKVSSFSDIFSGPVTETMKEFRFAPVEVPPGRLCASVTYRSDLSDFNLGAHITLPPRIITDYVGSPATDPMRFFPSPGRSVEGHSFTGRAGRPPLTGSSAERPHSWTSGFHRPPAQFATPNQSFSPAQSHQLSPGLHDFHWSRTDAFGDNHQLSPPFSPSGSPSTPRYISGGNSPRINVRPGTAPVTIPSSATLNRYVSSNFSEPGRNPLPPFSPKSTRRSPSSQDSLPGIALYRSSRSGESPSGLMNQYPTQKLSKDSKYDSGRFSGVLSSSDSPRFAFSRSPSRLSSQDDLDDPDCSCPFDFDDVDESGLQYSHSLDRRKTSSSISQSLPLGRRSSQDAAVGVLVHMLKTAPPLRQDSSTYMASMSGVQREGSVSGTESEFSMARSTSDALEELRNYKQLKDLLLSKSKSGSGPTRVH.

Ser-248 carries the phosphoserine modification. Disordered stretches follow at residues 258–477 (PSPG…DDLD) and 498–518 (SHSL…PLGR). Over residues 301–315 (ATPNQSFSPAQSHQL) the composition is skewed to polar residues. Over residues 320–331 (HDFHWSRTDAFG) the composition is skewed to basic and acidic residues. Composition is skewed to polar residues over residues 371-386 (IPSS…SNFS) and 419-437 (SSRS…PTQK). Over residues 453 to 473 (LSSSDSPRFAFSRSPSRLSSQ) the composition is skewed to low complexity.

It belongs to the ATG13 family. Plant subfamily. Interacts with ATG1A. Interacts with ATG11 and ATG101. In terms of processing, phosphorylated during nutrient starvation. Dephosphorylated in nutrient-rich conditions.

Its subcellular location is the cytoplasmic vesicle. It localises to the autophagosome. Its function is as follows. Involved in autophagy in a nutritional condition dependent manner. The ATG1-ATG13 protein kinase complex regulates downstream events required for autophagosome enclosure and/or vacuolar delivery. Becomes a target of autophagy under nutrient starvation. Connects autophagy to plant nutritional status. In Arabidopsis thaliana (Mouse-ear cress), this protein is Autophagy-related protein 13a.